The primary structure comprises 510 residues: MSAKKPMALVILDGYGYREDNQDNAIANAKTPVLDGLIANQPNTLISASGLDVGLPDGQMGNSEVGHTNIGAGRVVYQDLTRITKSIADGEFGQTEALVNAVDKAVKVDKAVHIMGLMSPGGVHSHEDHIYAAVEMAAARGAEKIYLHAFLDGRDTPPRSAENTLARFQELFAKLGKGRVASLIGRYYAMDRDNNWDRVQESYDLLTQAKAEFTFDTAVAGLEAAYARDENDEFVKATEIKAEGEESAVIVDGDAVIFMNYRADRAREITRAFVPDFDGFARNVFPAIDFVMLTQYAADIPLLCAFPPASLENTYGEWLSKEGKTQLRISETEKYAHVTFFFNGGKEDEFEGEERQLVASPKVATYDLQPEMSAPELTEKLVAAIKGGKYDAIVCNFPNCDMVGHTGVYDAAVKAVESLDECLGKVVEAIKEADGQLLITADHGNAEMMVNPETGGIHTAHTNLPVPLIYVGNKDVEFKEGGKLSDLAPTMLSLSGIDIPVEMSGDVIVK.

Residues Asp-13 and Ser-63 each coordinate Mn(2+). The active-site Phosphoserine intermediate is the Ser-63. Residues His-124, 154–155 (RD), Arg-186, Arg-192, 262–265 (RADR), and Lys-334 contribute to the substrate site. Asp-401, His-405, Asp-442, His-443, and His-461 together coordinate Mn(2+).

This sequence belongs to the BPG-independent phosphoglycerate mutase family. In terms of assembly, monomer. The cofactor is Mn(2+).

It catalyses the reaction (2R)-2-phosphoglycerate = (2R)-3-phosphoglycerate. It participates in carbohydrate degradation; glycolysis; pyruvate from D-glyceraldehyde 3-phosphate: step 3/5. Catalyzes the interconversion of 2-phosphoglycerate and 3-phosphoglycerate. This Vibrio atlanticus (strain LGP32) (Vibrio splendidus (strain Mel32)) protein is 2,3-bisphosphoglycerate-independent phosphoglycerate mutase.